The chain runs to 740 residues: Arf-GAP with coiled-coil, ANK repeat and PH domain-containing protein 1 (740 aa).

Residues 1–226 (MTVKLDFEEC…RKELGTQLHN (226 aa)) enclose the BAR domain. Positions 1–382 (MTVKLDFEEC…RGPGQVSGYH (382 aa)) are required for formation of endosomal tubules when overexpressed with PIP5K1C. A PH domain is found at 265 to 360 (GLVMEGHLFK…WVSAVQSSIA (96 aa)). Residues 405–527 (GQVAAQVQSV…KFLTKLPEIR (123 aa)) enclose the Arf-GAP domain. The tract at residues 405–740 (GQVAAQVQSV…SRRSHDLHTL (336 aa)) is required for interaction with GULP1. The C4-type zinc-finger motif lies at 420–443 (CCDCREPAPEWASINLGVTLCIQC). Tyr485 is subject to 3'-nitrotyrosine. The tract at residues 525–562 (EIRGRRGGRGPPRGHPPVPPKPPIRPHSGIVRSKSECP) is disordered. The tract at residues 525 to 566 (EIRGRRGGRGPPRGHPPVPPKPPIRPHSGIVRSKSECPSDDM) is prevents interaction with ITGB1 when S-554 is not phosphorylated. Pro residues predominate over residues 537–549 (RGHPPVPPKPPIR). 3 ANK repeats span residues 606-635 (GNAT…NVNQ), 639-668 (AGRG…DLGA), and 672-702 (EGRD…EAEA).

As to quaternary structure, banana-shaped homodimer laterally assembling into tetramers, the tetramers further pack helically onto the membrane. Interacts with GTP-bound ARF6. Interacts with third cytoplasmic loop of SLC2A4/GLUT4. Interacts with CLTC. Interacts with GULP1. Forms a complex with GDP-bound ARF6 and GULP1. Interacts with ITGB1; required for ITGB1 recycling.

The protein resides in the recycling endosome membrane. GAP activity stimulated by phosphatidylinositol 4,5-bisphosphate (PIP2) and phosphatidic acid. Its function is as follows. GTPase-activating protein (GAP) for ADP ribosylation factor 6 (ARF6) required for clathrin-dependent export of proteins from recycling endosomes to trans-Golgi network and cell surface. Required for regulated export of ITGB1 from recycling endosomes to the cell surface and ITGB1-dependent cell migration. This Mus musculus (Mouse) protein is Arf-GAP with coiled-coil, ANK repeat and PH domain-containing protein 1 (Acap1).